The chain runs to 64 residues: Large ribosomal subunit protein uL30 (64 aa).

Belongs to the universal ribosomal protein uL30 family. As to quaternary structure, part of the 50S ribosomal subunit.

This is Large ribosomal subunit protein uL30 from Bradyrhizobium diazoefficiens (strain JCM 10833 / BCRC 13528 / IAM 13628 / NBRC 14792 / USDA 110).